A 417-amino-acid polypeptide reads, in one-letter code: Gamma-glutamyl phosphate reductase (417 aa).

This sequence belongs to the gamma-glutamyl phosphate reductase family.

It is found in the cytoplasm. The catalysed reaction is L-glutamate 5-semialdehyde + phosphate + NADP(+) = L-glutamyl 5-phosphate + NADPH + H(+). The protein operates within amino-acid biosynthesis; L-proline biosynthesis; L-glutamate 5-semialdehyde from L-glutamate: step 2/2. Its function is as follows. Catalyzes the NADPH-dependent reduction of L-glutamate 5-phosphate into L-glutamate 5-semialdehyde and phosphate. The product spontaneously undergoes cyclization to form 1-pyrroline-5-carboxylate. In Chlorobium phaeobacteroides (strain BS1), this protein is Gamma-glutamyl phosphate reductase.